Reading from the N-terminus, the 484-residue chain is E-selectin (484 aa).

Positions 1-22 are cleaved as a signal peptide; it reads MIASQFLSALPLVLLLLRESGA. Residues 23-140 form the C-type lectin domain; sequence WSYSASTETM…CSKKKLALCY (118 aa). Over 23 to 429 the chain is Extracellular; sequence WSYSASTETM…CEAPAESKIP (407 aa). Intrachain disulfides connect cysteine 41–cysteine 139, cysteine 112–cysteine 131, cysteine 144–cysteine 155, cysteine 149–cysteine 164, cysteine 166–cysteine 175, cysteine 181–cysteine 222, cysteine 194–cysteine 204, cysteine 208–cysteine 235, cysteine 240–cysteine 285, cysteine 271–cysteine 298, cysteine 303–cysteine 348, cysteine 334–cysteine 361, cysteine 366–cysteine 407, and cysteine 393–cysteine 420. N-linked (GlcNAc...) asparagine glycosylation is found at asparagine 61, asparagine 65, and asparagine 79. Glutamate 102, asparagine 104, and glutamate 110 together coordinate Ca(2+). A carbohydrate contacts are provided by residues 102–110, 114–119, and 127–129; these read EPNNKQSNE, EIYIKR, and NDE. Ca(2+)-binding residues include asparagine 127 and aspartate 128. Positions 141-176 constitute an EGF-like domain; the sequence is TAACTPTSCSGHGECIETINSSTCQCYPGFRGLQCE. Residue asparagine 160 is glycosylated (N-linked (GlcNAc...) asparagine). Sushi domains lie at 179–237, 251–300, 301–363, and 364–422; these read VECD…TCKA, VSCN…VCKA, VKCP…SCQV, and VQCS…TCEA. Asparagine 201 is a glycosylation site (N-linked (GlcNAc...) asparagine). The N-linked (GlcNAc...) asparagine glycan is linked to asparagine 254. Asparagine 376 and asparagine 400 each carry an N-linked (GlcNAc...) asparagine glycan. A helical membrane pass occupies residues 430–451; sequence LAMGLAAGGVSFMTSASFLLWL. Residues 452-484 lie on the Cytoplasmic side of the membrane; it reads LKRLRKRAKKFVPSSSSECLQPNGSYQMPSDLI.

Belongs to the selectin/LECAM family. Interacts with SELPLG/PSGL1 and PODXL2 through the sialyl Lewis X epitope. SELPLG sulfation appears not to be required for this interaction.

It is found in the cell membrane. Cell-surface glycoprotein having a role in immunoadhesion. Mediates in the adhesion of blood neutrophils in cytokine-activated endothelium through interaction with SELPLG/PSGL1. May have a role in capillary morphogenesis. This is E-selectin (SELE) from Sus scrofa (Pig).